We begin with the raw amino-acid sequence, 443 residues long: Probable glycine dehydrogenase (decarboxylating) subunit 1 (443 aa).

It belongs to the GcvP family. N-terminal subunit subfamily. The glycine cleavage system is composed of four proteins: P, T, L and H. In this organism, the P 'protein' is a heterodimer of two subunits.

The enzyme catalyses N(6)-[(R)-lipoyl]-L-lysyl-[glycine-cleavage complex H protein] + glycine + H(+) = N(6)-[(R)-S(8)-aminomethyldihydrolipoyl]-L-lysyl-[glycine-cleavage complex H protein] + CO2. In terms of biological role, the glycine cleavage system catalyzes the degradation of glycine. The P protein binds the alpha-amino group of glycine through its pyridoxal phosphate cofactor; CO(2) is released and the remaining methylamine moiety is then transferred to the lipoamide cofactor of the H protein. In Nitratidesulfovibrio vulgaris (strain DP4) (Desulfovibrio vulgaris), this protein is Probable glycine dehydrogenase (decarboxylating) subunit 1.